The sequence spans 1487 residues: Chromosome partition protein MukB (1487 aa).

Glycine 34–serine 41 provides a ligand contact to ATP. 6 coiled-coil regions span residues glycine 297–leucine 458, arginine 506–isoleucine 601, leucine 637–serine 666, arginine 781–alanine 806, glutamate 836–threonine 1109, and valine 1210–isoleucine 1266. A flexible hinge region spans residues proline 667 to arginine 784.

This sequence belongs to the SMC family. MukB subfamily. Homodimerization via its hinge domain. Binds to DNA via its C-terminal region. Interacts, and probably forms a ternary complex, with MukE and MukF via its C-terminal region. The complex formation is stimulated by calcium or magnesium. Interacts with tubulin-related protein FtsZ.

The protein resides in the cytoplasm. Its subcellular location is the nucleoid. Plays a central role in chromosome condensation, segregation and cell cycle progression. Functions as a homodimer, which is essential for chromosome partition. Involved in negative DNA supercoiling in vivo, and by this means organize and compact chromosomes. May achieve or facilitate chromosome segregation by condensation DNA from both sides of a centrally located replisome during cell division. In Vibrio parahaemolyticus serotype O3:K6 (strain RIMD 2210633), this protein is Chromosome partition protein MukB.